The primary structure comprises 344 residues: 2,3,4,5-tetrahydropyridine-2,6-dicarboxylate N-succinyltransferase (344 aa).

Residue glutamate 205 participates in Mg(2+) binding. Glutamate 221 serves as the catalytic Acyl-anhydride intermediate. Succinyl-CoA is bound by residues arginine 223, glycine 238, serine 241, alanine 264, 279–280 (EA), 287–289 (GTK), lysine 304, and 317–320 (RRNS).

It belongs to the type 2 tetrahydrodipicolinate N-succinyltransferase family. As to quaternary structure, homotrimer. Requires Magnesium ions are not essential for catalysis. as cofactor.

It localises to the cytoplasm. The enzyme catalyses (S)-2,3,4,5-tetrahydrodipicolinate + succinyl-CoA + H2O = (S)-2-succinylamino-6-oxoheptanedioate + CoA. The protein operates within amino-acid biosynthesis; L-lysine biosynthesis via DAP pathway; LL-2,6-diaminopimelate from (S)-tetrahydrodipicolinate (succinylase route): step 1/3. Its activity is regulated as follows. Weakly inhibited by D-2-aminopimelate. Catalyzes the conversion of the cyclic tetrahydrodipicolinate (THDP) into the acyclic N-succinyl-L-2-amino-6-oxopimelate using succinyl-CoA. Displays succinyl transferase activity with L-2-aminopimelate and succinyl-CoA as substrates. The protein is 2,3,4,5-tetrahydropyridine-2,6-dicarboxylate N-succinyltransferase of Pseudomonas aeruginosa (strain ATCC 15692 / DSM 22644 / CIP 104116 / JCM 14847 / LMG 12228 / 1C / PRS 101 / PAO1).